The sequence spans 1244 residues: Ras-specific guanine nucleotide-releasing factor 1 (1244 aa).

In terms of domain architecture, PH 1 spans 22-129 (DGTRKGYLSK…WVAAIARASY (108 aa)). Serine 71 bears the Phosphoserine; by PLK2 mark. In terms of domain architecture, IQ spans 204-229 (KKIKKVQSFLRGWLCRRKWKNIIQDY). The region spanning 240-426 (KRNQVVFSML…EELSRVMHDE (187 aa)) is the DH domain. The region spanning 456–582 (TFVRQGSLIQ…WTSDIIQCVD (127 aa)) is the PH 2 domain. Phosphoserine; by PLK2 occurs at positions 575 and 611. The region spanning 629–743 (KVLQIRYASV…RRRKLSLNIP (115 aa)) is the N-terminal Ras-GEF domain. Residues 707–730 (GDAPKSPRASRKFSSPPPLAIGTS) form a disordered region. Serine 739 carries the post-translational modification Phosphoserine. Serine 760 and serine 781 each carry phosphoserine; by PLK2. The disordered stretch occupies residues 800–840 (TLEESSGFRKPTSDILKEESDDDQSDVDDTEVSPPTPKSFR). Positions 818-830 (ESDDDQSDVDDTE) are enriched in acidic residues. Serine 854 is subject to Phosphoserine; by PLK2. The 233-residue stretch at 1009–1241 (SAMEIAEQLT…YEASLRIEPK (233 aa)) folds into the Ras-GEF domain.

Homooligomer and heterooligomer with RASGRF2. Interacts with USP8, thereby regulating its stability. In terms of processing, phosphorylated by PLK2, leading to ubiquitination and degradation by the proteasome. Ubiquitinated and degraded following phosphorylation by PLK2. Post-translationally, phosphorylated by SRC and LCK. Phosphorylation by LCK increases its capacity to stimulate the GDP/GTP exchange on Ras, whereas its phosphorylation by SRC seems not to have an effect on stimulation activity.

In terms of biological role, promotes the exchange of Ras-bound GDP by GTP. The protein is Ras-specific guanine nucleotide-releasing factor 1 (Rasgrf1) of Rattus norvegicus (Rat).